The primary structure comprises 532 residues: BEL1-like homeodomain protein 6 (532 aa).

Residues 144–160 (SKYLKAAQQLLDEAVNV) form an SR/KY domain region. Residues 170–203 (EGDKNNENPQEPNQSTQDSSTNPPADISQSERQE) form a disordered region. The span at 176-197 (ENPQEPNQSTQDSSTNPPADIS) shows a compositional bias: polar residues. The segment at 200–271 (ERQEMQSKLT…SLRDAISGQI (72 aa)) is BELL domain. Residues 314–376 (AWRPQRGLPE…NARVRLWKPM (63 aa)) constitute a DNA-binding region (homeobox). The tract at residues 385 to 434 (FTENDSNSSSENTPKMSEIGPVAADDEDRAREFSQDQTKPDHGHGYGEET) is disordered. Positions 412–434 (DRAREFSQDQTKPDHGHGYGEET) are enriched in basic and acidic residues.

The protein belongs to the TALE/BELL homeobox family. May form heterodimeric complexes with TALE/KNOX proteins. Interacts with OFP2, OFP4, and OFP5.

The protein resides in the nucleus. In Arabidopsis thaliana (Mouse-ear cress), this protein is BEL1-like homeodomain protein 6 (BLH6).